Consider the following 240-residue polypeptide: Ribonuclease PH (240 aa).

Phosphate is bound by residues Arg87 and 125-127; that span reads GTR.

This sequence belongs to the RNase PH family. As to quaternary structure, homohexameric ring arranged as a trimer of dimers.

It carries out the reaction tRNA(n+1) + phosphate = tRNA(n) + a ribonucleoside 5'-diphosphate. In terms of biological role, phosphorolytic 3'-5' exoribonuclease that plays an important role in tRNA 3'-end maturation. Removes nucleotide residues following the 3'-CCA terminus of tRNAs; can also add nucleotides to the ends of RNA molecules by using nucleoside diphosphates as substrates, but this may not be physiologically important. Probably plays a role in initiation of 16S rRNA degradation (leading to ribosome degradation) during starvation. This Pseudomonas syringae pv. syringae (strain B728a) protein is Ribonuclease PH.